The sequence spans 267 residues: Sorbitol-6-phosphate 2-dehydrogenase (267 aa).

9 to 38 (DNVIIVTGGASGIGLAIVDELLSQGAHVQM) contributes to the NAD(+) binding site. Residue serine 147 participates in substrate binding. The active-site Proton acceptor is tyrosine 160.

Belongs to the short-chain dehydrogenases/reductases (SDR) family. As to quaternary structure, homotetramer.

It carries out the reaction D-sorbitol 6-phosphate + NAD(+) = beta-D-fructose 6-phosphate + NADH + H(+). It functions in the pathway carbohydrate metabolism; D-sorbitol degradation; D-fructose 6-phosphate from D-sorbitol 6-phosphate: step 1/1. This Klebsiella pneumoniae protein is Sorbitol-6-phosphate 2-dehydrogenase (sorD).